A 101-amino-acid chain; its full sequence is NAD(P)H-quinone oxidoreductase subunit 4L, chloroplastic (101 aa).

The next 3 helical transmembrane spans lie at 2 to 22 (MLEHVLVLSSYLLSIGIYGLI), 32 to 52 (MCLELILNAVNINFVTFSDLF), and 61 to 81 (IFSIFVIGIAAAEAAIGLAII).

The protein belongs to the complex I subunit 4L family. In terms of assembly, NDH is composed of at least 16 different subunits, 5 of which are encoded in the nucleus.

Its subcellular location is the plastid. The protein resides in the chloroplast thylakoid membrane. It carries out the reaction a plastoquinone + NADH + (n+1) H(+)(in) = a plastoquinol + NAD(+) + n H(+)(out). It catalyses the reaction a plastoquinone + NADPH + (n+1) H(+)(in) = a plastoquinol + NADP(+) + n H(+)(out). NDH shuttles electrons from NAD(P)H:plastoquinone, via FMN and iron-sulfur (Fe-S) centers, to quinones in the photosynthetic chain and possibly in a chloroplast respiratory chain. The immediate electron acceptor for the enzyme in this species is believed to be plastoquinone. Couples the redox reaction to proton translocation, and thus conserves the redox energy in a proton gradient. The polypeptide is NAD(P)H-quinone oxidoreductase subunit 4L, chloroplastic (Ranunculus macranthus (Large buttercup)).